The sequence spans 606 residues: MKDLLMPIQENIRNFSIIAHIDHGKSTLADRILEYTNLVSDREKRDQYLDKMELERERGITIKAQTVRIPYITADGKTYILNLIDTPGHVDFNYEVSRSLSACEGSLLVIDTTQGVEAQTLANVYLALEHNHEVIPILNKIDLPSADIEKVKAEIEETIGLDCSTAISISAKTGLGVDSVLEAIVQQLPAPKGDPNNPLKALIFDSWYDAYQGVVVLFRIMDGTIKKNDIIKLFSTEKSYEITRLGVFSPEAIDIPQLSAGEVGFLCGNIKTLGDAKVGDTITLLHNPCTKAIPGFKEIQPVVFCGLYPSESSDYDILKAALEKLQLNDAAFSWEPETSQALGFGFRCGFLGLLHMEIIQERLEREFQVELIATAPSVIYKVETTDGKIQEIDNPSKLPELGKIVHLYEPYVHIDIHVPSEFVGNVLKLCEEKRGIQKNIAYPAQQRVIITYELPFSEIVFDFFDRLKSATKGYASMDYEVIDYRISNLVRLDILLNGEPVDALAVIVHRDKAYHYGRSLAIKLKKTIPRQMFEVAIQAAIGQKVIARESISALRKNVTAKCYGGDITRKRKLLEKQKEGKKRMKRMGNVELPQEAFLAALQMGDD.

The tr-type G domain occupies 10–192 (ENIRNFSIIA…AIVQQLPAPK (183 aa)). Residues 22–27 (DHGKST) and 139–142 (NKID) each bind GTP.

The protein belongs to the TRAFAC class translation factor GTPase superfamily. Classic translation factor GTPase family. LepA subfamily.

It localises to the cell membrane. The catalysed reaction is GTP + H2O = GDP + phosphate + H(+). In terms of biological role, required for accurate and efficient protein synthesis under certain stress conditions. May act as a fidelity factor of the translation reaction, by catalyzing a one-codon backward translocation of tRNAs on improperly translocated ribosomes. Back-translocation proceeds from a post-translocation (POST) complex to a pre-translocation (PRE) complex, thus giving elongation factor G a second chance to translocate the tRNAs correctly. Binds to ribosomes in a GTP-dependent manner. This Lawsonia intracellularis (strain PHE/MN1-00) protein is Elongation factor 4.